A 401-amino-acid polypeptide reads, in one-letter code: Probable sodium/metabolite cotransporter BASS1, chloroplastic (401 aa).

A chloroplast-targeting transit peptide spans 1–70 (MASAISLSLL…RRSRFDFVPR (70 aa)). Helical transmembrane passes span 92 to 112 (FVGE…CLLG), 122 to 142 (VTPN…GMTL), 156 to 176 (ELFA…FFVS), 187 to 207 (AGLI…VTYI), 212 to 232 (VALS…MTPL), 247 to 267 (LGLL…GAFL), 278 to 298 (VSPV…GYAI), 311 to 331 (QVVL…YLFS), and 371 to 391 (VPCA…AGIW).

Belongs to the bile acid:sodium symporter (BASS) (TC 2.A.28) family.

It is found in the membrane. The protein localises to the plastid. Its subcellular location is the chloroplast envelope. In terms of biological role, may function as sodium-coupled metabolite transporter across the chloroplast envelope. The protein is Probable sodium/metabolite cotransporter BASS1, chloroplastic (BASS1) of Arabidopsis thaliana (Mouse-ear cress).